The chain runs to 222 residues: Putative hemin import ATP-binding protein HrtA (222 aa).

Residues Leu-3 to Ser-222 enclose the ABC transporter domain. Residue Gly-39–Thr-46 participates in ATP binding.

The protein belongs to the ABC transporter superfamily. HrtA family. The complex is composed of two ATP-binding proteins (HrtA), two transmembrane proteins (HrtB) and a solute-binding protein.

It localises to the cell membrane. Functionally, part of the ABC transporter complex hrt involved in hemin import. Responsible for energy coupling to the transport system. In Staphylococcus epidermidis (strain ATCC 35984 / DSM 28319 / BCRC 17069 / CCUG 31568 / BM 3577 / RP62A), this protein is Putative hemin import ATP-binding protein HrtA (hrtA).